The following is a 180-amino-acid chain: Large ribosomal subunit protein uL10 (180 aa).

It belongs to the universal ribosomal protein uL10 family. In terms of assembly, part of the ribosomal stalk of the 50S ribosomal subunit. The N-terminus interacts with L11 and the large rRNA to form the base of the stalk. The C-terminus forms an elongated spine to which L12 dimers bind in a sequential fashion forming a multimeric L10(L12)X complex.

Functionally, forms part of the ribosomal stalk, playing a central role in the interaction of the ribosome with GTP-bound translation factors. This chain is Large ribosomal subunit protein uL10 (rplJ), found in Treponema pallidum (strain Nichols).